Reading from the N-terminus, the 331-residue chain is Serine/threonine-protein phosphatase 6 catalytic subunit (331 aa).

Residues aspartate 79, histidine 81, aspartate 107, and asparagine 139 each coordinate Mn(2+). The active-site Proton donor is the histidine 140. Mn(2+)-binding residues include histidine 189 and histidine 264.

This sequence belongs to the PPP phosphatase family. PP-6 (PP-V) subfamily. In terms of assembly, forms a complex composed of catalytic subunit pph-6 and regulatory subunit saps-1; the interaction increases pph-6 and saps-1 protein stability. Requires Mn(2+) as cofactor.

Its subcellular location is the cytoplasm. It is found in the cell cortex. The protein resides in the cytoskeleton. The protein localises to the spindle pole. The catalysed reaction is O-phospho-L-seryl-[protein] + H2O = L-seryl-[protein] + phosphate. It catalyses the reaction O-phospho-L-threonyl-[protein] + H2O = L-threonyl-[protein] + phosphate. Functionally, catalytic subunit of protein phosphatase 6 (PP6). In complex with saps-1, promotes actomyosin contractility during cytokinesis by regulating the organization of cortical non-muscle myosin II nmy-2 and thus contributing to correct spindle positioning. Also required for the proper generation of pulling forces on spindle poles during anaphase by regulating the cortical localization of gpr-1, gpr-2 and lin-5. The sequence is that of Serine/threonine-protein phosphatase 6 catalytic subunit from Caenorhabditis elegans.